The following is a 174-amino-acid chain: MARLLEEHGFETKTNVIVQGNCVEQEIDVVAERDGERYMIECKFHNIPVYTGLKEAMYTYARFLDVEKHGFTQPWIFTNTKFSEEAKKYAGCVGIKLTGWSYPEKEGIEVLLESKGLYPITILRIDKEVLDELVRAGLVFCRDVVSAGEEKLREIGLSAKKAREVIAEAKKVIG.

This is an uncharacterized protein from Archaeoglobus fulgidus (strain ATCC 49558 / DSM 4304 / JCM 9628 / NBRC 100126 / VC-16).